The primary structure comprises 549 residues: Arginine-containing cyclodipeptide synthase amaA (549 aa).

The Conserved DDXXE motif signature appears at 445–449 (DDRAE).

The protein belongs to the arginine-containing cyclodipeptide synthase family.

The catalysed reaction is L-prolyl-tRNA(Pro) + L-arginyl-tRNA(Arg) = cyclo(L-arginyl-L-prolyl) + tRNA(Pro) + tRNA(Arg) + 2 H(+). It functions in the pathway secondary metabolite biosynthesis. Its function is as follows. Arginine-containing cyclodipeptide synthase; part of the cluster that mediates the biosynthesis of a highly modified cyclo-arginine-proline dipeptide (cRP). Within the pathway, amaA acts as the scaffold-generating enzyme and is responsible for formation of the cyclo-Arg-Pro diketopiperazine (cRW) from L-arginyl-tRNA(Arg) + L-prolyl-tRNA(Pro). Additional enzymes from the cluster then further modify the cyclo-Arg-Pro diketopiperazine (cRW) scaffold. This chain is Arginine-containing cyclodipeptide synthase amaA, found in Apiospora montagnei (Sphaeria apiospora).